A 1134-amino-acid chain; its full sequence is Protocadherin-18 (1134 aa).

The signal sequence occupies residues 1-27 (MYQMNAKMHFTFVFALLVVSFNLDVLG). Cadherin domains are found at residues 28-137 (KNLK…SPQF), 138-246 (SRSL…SPAF), 247-354 (EQQS…KPEI), 361-465 (PGKE…PPHF), 466-576 (QRSR…VPVV), and 582-697 (RNNT…APLD). The Extracellular portion of the chain corresponds to 28–699 (KNLKYRIYEE…SVSQAPLDVS (672 aa)). Asn103 is a glycosylation site (N-linked (GlcNAc...) asparagine). Residue Asn269 is glycosylated (N-linked (GlcNAc...) asparagine). N-linked (GlcNAc...) asparagine glycosylation occurs at Asn559. A helical transmembrane segment spans residues 700 to 720 (MIIIISLGAICAVLLVIMVLF). Residues 721 to 1134 (ATRCNREKKD…NKLLQDVRQS (414 aa)) lie on the Cytoplasmic side of the membrane. 3 disordered regions span residues 768–800 (TLPIRSHHRSSPSSSPTLERGQMGSRQSHNSHQ), 868–888 (SLKDSGRGDSEAGDSDYDLGR), and 941–1003 (DYRS…TSSL). Over residues 791–800 (GSRQSHNSHQ) the composition is skewed to polar residues. Basic and acidic residues predominate over residues 868–877 (SLKDSGRGDS). The interval 892–1134 (IDRLLGEGFS…NKLLQDVRQS (243 aa)) is interaction with DAB1.

In terms of assembly, interacts with DAB1.

Its subcellular location is the cell membrane. Its function is as follows. Potential calcium-dependent cell-adhesion protein. The polypeptide is Protocadherin-18 (PCDH18) (Bos taurus (Bovine)).